Reading from the N-terminus, the 93-residue chain is Large ribosomal subunit protein uL23cz/uL23cy (93 aa).

It belongs to the universal ribosomal protein uL23 family. Part of the 50S ribosomal subunit.

It is found in the plastid. The protein resides in the chloroplast. Binds to 23S rRNA. This is Large ribosomal subunit protein uL23cz/uL23cy (rpl23-A) from Coffea arabica (Arabian coffee).